Consider the following 194-residue polypeptide: WASH complex subunit 3 (194 aa).

The residue at position 1 (Met1) is an N-acetylmethionine. A coiled-coil region spans residues 46-74; sequence TVCEEKLADLSLRIQQIETTLNILDAKLS. Disordered regions lie at residues 93-121 and 159-194; these read SVTNGAHPEATSEQPQQNSTQDSGLQESE and EGLDPDLLERPDAPVPDGESEKTVEESSDSESSFSD. Over residues 103–121 the composition is skewed to polar residues; the sequence is TSEQPQQNSTQDSGLQESE.

This sequence belongs to the CCDC53 family. In terms of assembly, component of the WASH core complex also described as WASH regulatory complex (SHRC) composed of WASH (WASHC1, WASH2P or WASH3P), WASHC2 (WASHC2A or WASHC2C), WASHC3, WASHC4 and WASHC5. The WASH core complex associates via WASHC2 with the F-actin-capping protein dimer (formed by CAPZA1, CAPZA2 or CAPZA3 and CAPZB) in a transient or substoichiometric manner which was initially described as WASH complex.

The protein localises to the early endosome. Functionally, acts as a component of the WASH core complex that functions as a nucleation-promoting factor (NPF) at the surface of endosomes, where it recruits and activates the Arp2/3 complex to induce actin polymerization, playing a key role in the fission of tubules that serve as transport intermediates during endosome sorting. The protein is WASH complex subunit 3 of Homo sapiens (Human).